Here is a 394-residue protein sequence, read N- to C-terminus: Elongation factor Tu (394 aa).

In terms of domain architecture, tr-type G spans 10–204 (KPHVNVGTIG…HLDSYIPEPE (195 aa)). Positions 19-26 (GHVDHGKT) are G1. Residue 19-26 (GHVDHGKT) participates in GTP binding. Residue Thr26 coordinates Mg(2+). Residues 60 to 64 (GITIN) form a G2 region. The G3 stretch occupies residues 81 to 84 (DCPG). GTP-binding positions include 81–85 (DCPGH) and 136–139 (NKCD). A G4 region spans residues 136 to 139 (NKCD). Positions 174 to 176 (SAL) are G5.

The protein belongs to the TRAFAC class translation factor GTPase superfamily. Classic translation factor GTPase family. EF-Tu/EF-1A subfamily. In terms of assembly, monomer.

Its subcellular location is the cytoplasm. The catalysed reaction is GTP + H2O = GDP + phosphate + H(+). In terms of biological role, GTP hydrolase that promotes the GTP-dependent binding of aminoacyl-tRNA to the A-site of ribosomes during protein biosynthesis. The chain is Elongation factor Tu from Cronobacter sakazakii (strain ATCC BAA-894) (Enterobacter sakazakii).